The chain runs to 438 residues: Serine hydroxymethyltransferase 1 (438 aa).

Residues Leu130 and 134–136 (GHL) each bind (6S)-5,6,7,8-tetrahydrofolate. Lys239 is modified (N6-(pyridoxal phosphate)lysine).

Belongs to the SHMT family. As to quaternary structure, homodimer. Requires pyridoxal 5'-phosphate as cofactor.

The protein localises to the cytoplasm. It carries out the reaction (6R)-5,10-methylene-5,6,7,8-tetrahydrofolate + glycine + H2O = (6S)-5,6,7,8-tetrahydrofolate + L-serine. It participates in one-carbon metabolism; tetrahydrofolate interconversion. It functions in the pathway amino-acid biosynthesis; glycine biosynthesis; glycine from L-serine: step 1/1. Its function is as follows. Catalyzes the reversible interconversion of serine and glycine with tetrahydrofolate (THF) serving as the one-carbon carrier. This reaction serves as the major source of one-carbon groups required for the biosynthesis of purines, thymidylate, methionine, and other important biomolecules. Also exhibits THF-independent aldolase activity toward beta-hydroxyamino acids, producing glycine and aldehydes, via a retro-aldol mechanism. Thus, is able to catalyze the cleavage of L-allo-threonine. The chain is Serine hydroxymethyltransferase 1 from Mycobacterium tuberculosis (strain ATCC 25618 / H37Rv).